We begin with the raw amino-acid sequence, 117 residues long: MKLCAVIIASLLVCAAVASSSDNQKEFAQEKEMTREETQSLGEHEKDDEVTGSEERSCIEEWKTCENDCECCGMSTLCAASWVDGHQIKLCRNEGGKLKKVLHFIQKSVSKIKSCKK.

A signal peptide spans 1-20 (MKLCAVIIASLLVCAAVASS). Residues 18–55 (ASSSDNQKEFAQEKEMTREETQSLGEHEKDDEVTGSEE) form a disordered region. Residues 21-56 (SDNQKEFAQEKEMTREETQSLGEHEKDDEVTGSEER) constitute a propeptide that is removed on maturation. Basic and acidic residues predominate over residues 23–55 (NQKEFAQEKEMTREETQSLGEHEKDDEVTGSEE). Cystine bridges form between C58/C72, C65/C78, C69/C115, and C71/C91.

It belongs to the neurotoxin 03 (Tx2) family. 02 subfamily. HNTX-XV sub-subfamily. As to expression, expressed by the venom gland.

Its subcellular location is the secreted. Its function is as follows. Putative ion channel inhibitor. The protein is Hainantoxin-XV.2 of Cyriopagopus hainanus (Chinese bird spider).